Consider the following 704-residue polypeptide: Serotransferrin (704 aa).

The signal sequence occupies residues 1-19; it reads MRPAVRALLACAVLGLCLA. 2 Transferrin-like domains span residues 25–351 and 364–689; these read VRWC…NLRE and VKWC…NLRQ. Intrachain disulfides connect cysteine 28–cysteine 66 and cysteine 38–cysteine 57. Arginine 42 is modified (dimethylated arginine). Positions 81 and 113 each coordinate Fe(3+). 5 cysteine pairs are disulfide-bonded: cysteine 136-cysteine 217, cysteine 176-cysteine 192, cysteine 179-cysteine 200, cysteine 189-cysteine 202, and cysteine 250-cysteine 264. Residues threonine 138, arginine 142, alanine 144, and glycine 145 each coordinate hydrogencarbonate. Tyrosine 211 contacts Fe(3+). Histidine 272 is a binding site for Fe(3+). Intrachain disulfides connect cysteine 362–cysteine 622, cysteine 367–cysteine 399, cysteine 377–cysteine 390, cysteine 424–cysteine 699, cysteine 441–cysteine 663, cysteine 473–cysteine 549, cysteine 497–cysteine 690, cysteine 507–cysteine 521, cysteine 518–cysteine 532, cysteine 589–cysteine 603, and cysteine 641–cysteine 646. Positions 414 and 449 each coordinate Fe(3+). Hydrogencarbonate-binding residues include threonine 475, arginine 479, alanine 481, and glycine 482. The N-linked (GlcNAc...) asparagine glycan is linked to asparagine 514. A Fe(3+)-binding site is contributed by tyrosine 543. Histidine 611 contacts Fe(3+). Serine 691 bears the Phosphoserine mark.

This sequence belongs to the transferrin family. As to quaternary structure, monomer. Part of a complex composed of SLC40A1/ferroportin, TF/transferrin and HEPH/hephaestin that transfers iron from cells to transferrin. As to expression, expressed by the liver and secreted in plasma.

It localises to the secreted. Its function is as follows. Transferrins are iron binding transport proteins which can bind two Fe(3+) ions in association with the binding of an anion, usually bicarbonate. It is responsible for the transport of iron from sites of absorption and heme degradation to those of storage and utilization. Serum transferrin may also have a further role in stimulating cell proliferation. This is Serotransferrin (TF) from Bos taurus (Bovine).